The sequence spans 86 residues: RNA-binding protein Hfq (86 aa).

Positions 10–71 constitute a Sm domain; the sequence is DLFLNNARKE…VSTIQPGKYI (62 aa).

It belongs to the Hfq family. In terms of assembly, homohexamer.

Functionally, RNA chaperone that binds small regulatory RNA (sRNAs) and mRNAs to facilitate mRNA translational regulation in response to envelope stress, environmental stress and changes in metabolite concentrations. Also binds with high specificity to tRNAs. In Clostridioides difficile (strain 630) (Peptoclostridium difficile), this protein is RNA-binding protein Hfq.